The following is a 416-amino-acid chain: Adenylosuccinate synthetase (416 aa).

GTP is bound by residues 13 to 19 (GDEGKGK) and 41 to 43 (GHT). Asp-14 (proton acceptor) is an active-site residue. Mg(2+)-binding residues include Asp-14 and Gly-41. Residues 14–17 (DEGK), 39–42 (NAGH), Thr-126, Arg-140, Gln-220, Thr-235, and Arg-299 contribute to the IMP site. His-42 serves as the catalytic Proton donor. Position 295-301 (295-301 (VSTGRKR)) interacts with substrate. GTP-binding positions include Arg-301, 327–329 (KLD), and 405–407 (STS).

Belongs to the adenylosuccinate synthetase family. As to quaternary structure, homodimer. Mg(2+) serves as cofactor.

The protein resides in the cytoplasm. It catalyses the reaction IMP + L-aspartate + GTP = N(6)-(1,2-dicarboxyethyl)-AMP + GDP + phosphate + 2 H(+). Its pathway is purine metabolism; AMP biosynthesis via de novo pathway; AMP from IMP: step 1/2. Plays an important role in the de novo pathway of purine nucleotide biosynthesis. Catalyzes the first committed step in the biosynthesis of AMP from IMP. This Campylobacter lari (strain RM2100 / D67 / ATCC BAA-1060) protein is Adenylosuccinate synthetase.